The chain runs to 264 residues: S-adenosylmethionine decarboxylase proenzyme (264 aa).

The Schiff-base intermediate with substrate; via pyruvic acid role is filled by Ser112. Ser112 bears the Pyruvic acid (Ser); by autocatalysis mark. His117 serves as the catalytic Proton acceptor; for processing activity. Catalysis depends on Cys140, which acts as the Proton donor; for catalytic activity.

The protein belongs to the prokaryotic AdoMetDC family. Type 2 subfamily. As to quaternary structure, heterooctamer of four alpha and four beta chains arranged as a tetramer of alpha/beta heterodimers. It depends on pyruvate as a cofactor. In terms of processing, is synthesized initially as an inactive proenzyme. Formation of the active enzyme involves a self-maturation process in which the active site pyruvoyl group is generated from an internal serine residue via an autocatalytic post-translational modification. Two non-identical subunits are generated from the proenzyme in this reaction, and the pyruvate is formed at the N-terminus of the alpha chain, which is derived from the carboxyl end of the proenzyme. The post-translation cleavage follows an unusual pathway, termed non-hydrolytic serinolysis, in which the side chain hydroxyl group of the serine supplies its oxygen atom to form the C-terminus of the beta chain, while the remainder of the serine residue undergoes an oxidative deamination to produce ammonia and the pyruvoyl group blocking the N-terminus of the alpha chain.

The catalysed reaction is S-adenosyl-L-methionine + H(+) = S-adenosyl 3-(methylsulfanyl)propylamine + CO2. It participates in amine and polyamine biosynthesis; S-adenosylmethioninamine biosynthesis; S-adenosylmethioninamine from S-adenosyl-L-methionine: step 1/1. Catalyzes the decarboxylation of S-adenosylmethionine to S-adenosylmethioninamine (dcAdoMet), the propylamine donor required for the synthesis of the polyamines spermine and spermidine from the diamine putrescine. This Salmonella gallinarum (strain 287/91 / NCTC 13346) protein is S-adenosylmethionine decarboxylase proenzyme.